An 88-amino-acid chain; its full sequence is MCVCAIPFFEFFLPFIPHYAFLLFVSSVRFTVNERCYYLVCVLKLNCAFFFMVMIFELKRVCVSYLDRSRKIQIVSFFPFITIIFFHS.

The next 2 membrane-spanning stretches (helical) occupy residues 5–25 (AIPF…LLFV) and 36–56 (CYYL…VMIF).

It is found in the membrane. This is an uncharacterized protein from Saccharomyces cerevisiae (strain ATCC 204508 / S288c) (Baker's yeast).